The sequence spans 282 residues: Bifunctional protein FolD (282 aa).

NADP(+) contacts are provided by residues 165-167 (GRS) and serine 190.

The protein belongs to the tetrahydrofolate dehydrogenase/cyclohydrolase family. As to quaternary structure, homodimer.

It catalyses the reaction (6R)-5,10-methylene-5,6,7,8-tetrahydrofolate + NADP(+) = (6R)-5,10-methenyltetrahydrofolate + NADPH. The enzyme catalyses (6R)-5,10-methenyltetrahydrofolate + H2O = (6R)-10-formyltetrahydrofolate + H(+). It functions in the pathway one-carbon metabolism; tetrahydrofolate interconversion. Its function is as follows. Catalyzes the oxidation of 5,10-methylenetetrahydrofolate to 5,10-methenyltetrahydrofolate and then the hydrolysis of 5,10-methenyltetrahydrofolate to 10-formyltetrahydrofolate. This is Bifunctional protein FolD from Acinetobacter baumannii (strain ATCC 17978 / DSM 105126 / CIP 53.77 / LMG 1025 / NCDC KC755 / 5377).